The following is a 377-amino-acid chain: Chaperone protein DnaJ (377 aa).

Residues 5–70 (DYYEVLGVSR…DKKAAYDQFG (66 aa)) enclose the J domain. The segment at 133–211 (GLTKELRIPT…CHGDGRVEKS (79 aa)) adopts a CR-type zinc-finger fold. Zn(2+) is bound by residues C146, C149, C163, C166, C185, C188, C199, and C202. CXXCXGXG motif repeat units follow at residues 146-153 (CDLCEGSG), 163-170 (CGTCHGQG), 185-192 (CPTCHGRG), and 199-206 (CTKCHGDG).

It belongs to the DnaJ family. In terms of assembly, homodimer. Zn(2+) is required as a cofactor.

Its subcellular location is the cytoplasm. Its function is as follows. Participates actively in the response to hyperosmotic and heat shock by preventing the aggregation of stress-denatured proteins and by disaggregating proteins, also in an autonomous, DnaK-independent fashion. Unfolded proteins bind initially to DnaJ; upon interaction with the DnaJ-bound protein, DnaK hydrolyzes its bound ATP, resulting in the formation of a stable complex. GrpE releases ADP from DnaK; ATP binding to DnaK triggers the release of the substrate protein, thus completing the reaction cycle. Several rounds of ATP-dependent interactions between DnaJ, DnaK and GrpE are required for fully efficient folding. Also involved, together with DnaK and GrpE, in the DNA replication of plasmids through activation of initiation proteins. This Shewanella baltica (strain OS223) protein is Chaperone protein DnaJ.